The primary structure comprises 363 residues: 3-dehydroquinate synthase (363 aa).

NAD(+) is bound by residues 72–77 (SGEKEK), 130–131 (TT), K142, and K151. Positions 184, 247, and 264 each coordinate Zn(2+).

This sequence belongs to the sugar phosphate cyclases superfamily. Dehydroquinate synthase family. Co(2+) is required as a cofactor. Zn(2+) serves as cofactor. The cofactor is NAD(+).

It localises to the cytoplasm. The catalysed reaction is 7-phospho-2-dehydro-3-deoxy-D-arabino-heptonate = 3-dehydroquinate + phosphate. The protein operates within metabolic intermediate biosynthesis; chorismate biosynthesis; chorismate from D-erythrose 4-phosphate and phosphoenolpyruvate: step 2/7. Functionally, catalyzes the conversion of 3-deoxy-D-arabino-heptulosonate 7-phosphate (DAHP) to dehydroquinate (DHQ). The chain is 3-dehydroquinate synthase from Bacillus anthracis (strain A0248).